The primary structure comprises 286 residues: Putative 2-aminoethylphosphonate transport system permease protein PhnU (286 aa).

6 helical membrane-spanning segments follow: residues 19 to 39 (WLLLPLLVLATLFFWPLSLIV), 76 to 96 (FFATAGCLLLGSAMSLILVFI), 111 to 131 (FIALPTFLITLAFTFIYGSAG), 150 to 170 (FLYSMQGVILAEITVFTPLVM), 202 to 222 (VIFPAALPALMAGGSLCLLLT), and 254 to 274 (YTVACMIALINIVLSLGLFSL). An ABC transmembrane type-1 domain is found at 68 to 275 (LLNTLQIAFF…VLSLGLFSLY (208 aa)).

Belongs to the binding-protein-dependent transport system permease family.

It localises to the cell inner membrane. Functionally, probably part of the PhnSTUV complex (TC 3.A.1.11.5) involved in 2-aminoethylphosphonate import. Probably responsible for the translocation of the substrate across the membrane. The protein is Putative 2-aminoethylphosphonate transport system permease protein PhnU (phnU) of Salmonella choleraesuis (strain SC-B67).